We begin with the raw amino-acid sequence, 133 residues long: Glutaredoxin-C4, chloroplastic (133 aa).

Low complexity predominate over residues Met1–Pro13. The disordered stretch occupies residues Met1–Pro25. Residues Met1–Met27 constitute a chloroplast transit peptide. A Glutaredoxin domain is found at Leu29 to Ala129. Cys49 and Cys52 are oxidised to a cystine.

It belongs to the glutaredoxin family. CPYC subfamily.

The protein resides in the plastid. The protein localises to the chloroplast. In terms of biological role, has a glutathione-disulfide oxidoreductase activity in the presence of NADPH and glutathione reductase. Reduces low molecular weight disulfides and proteins. The sequence is that of Glutaredoxin-C4, chloroplastic (GRXC4) from Oryza sativa subsp. japonica (Rice).